A 282-amino-acid polypeptide reads, in one-letter code: HTH-type transcriptional activator RhaR (282 aa).

Residues 179–277 form the HTH araC/xylS-type domain; sequence DKLITRLAAS…GMTPSQWRHL (99 aa). DNA-binding regions (H-T-H motif) lie at residues 196–217 and 244–267; these read DKFCDEASCSERVLRQQFRQQT and ISDISTECGFEDSNYFSVVFTRET.

Binds DNA as a dimer.

The protein resides in the cytoplasm. In terms of biological role, activates expression of the rhaSR operon in response to L-rhamnose. The protein is HTH-type transcriptional activator RhaR of Escherichia coli (strain K12 / MC4100 / BW2952).